The primary structure comprises 278 residues: Undecaprenyl-diphosphatase (278 aa).

The next 8 helical transmembrane spans lie at 3-23 (YILIGVILGIVQGISEWIPIS), 42-62 (VAYSFGLFMEIGTIAAAIIYF), 88-108 (FLVIVTIITGLMGVPLYLFVI), 112-132 (ILGLPMTVLGVVLLIDGIIIY), 152-172 (IIIVGIAQGLAALPGVSRSGI), 190-210 (LSFISLIPAALGAIGVTVLFS), 225-245 (GLLISIVVATFVSIFFINALL), and 253-273 (VVVLVIILGIIAIISGILSGI).

It belongs to the UppP family.

The protein localises to the cell membrane. It carries out the reaction di-trans,octa-cis-undecaprenyl diphosphate + H2O = di-trans,octa-cis-undecaprenyl phosphate + phosphate + H(+). Functionally, catalyzes the dephosphorylation of undecaprenyl diphosphate (UPP). The chain is Undecaprenyl-diphosphatase from Saccharolobus islandicus (strain M.16.4 / Kamchatka #3) (Sulfolobus islandicus).